Here is a 280-residue protein sequence, read N- to C-terminus: Secreted RxLR effector protein 39 (280 aa).

The N-terminal stretch at 1–19 (MRGAYYVAIALLIVASCSA) is a signal peptide. Residues 49 to 70 (RVLRGSRDLKNKWAVHAGGEDR) carry the RxLR-dEER motif. The interval 229-249 (EVKARSSKRQRTNPMLNNMDG) is disordered.

This sequence belongs to the RxLR effector family.

It is found in the secreted. Its subcellular location is the host nucleus. Functionally, secreted effector that completely suppresses the host cell death induced by cell death-inducing proteins. The sequence is that of Secreted RxLR effector protein 39 from Plasmopara viticola (Downy mildew of grapevine).